A 108-amino-acid polypeptide reads, in one-letter code: Circadian clock oscillator protein KaiB (108 aa).

Belongs to the KaiB family. May undergo a major conformational rearrangment; in the free state forms homooligomers. When bound to KaiC switches to a monomeric thioredoxin-fold (KaiB(fs)). The active oscillator complex is probably KaiC(6):KaiB(6).

In terms of biological role, component of the KaiBC clock protein complex, which constitutes the main circadian regulator in cyanobacteria; it may modify the ATPase activity of KaiC. May be a metamorphic protein which reversibly switches between an inactive tetrameric fold and a rare, thioredoxin-like monomeric fold (KaiB(fs)). KaiB(fs) binds phospho-KaiC, and perhaps clock output effectors. The protein is Circadian clock oscillator protein KaiB of Prochlorococcus marinus (strain MIT 9515).